The chain runs to 234 residues: Ubiquinone biosynthesis O-methyltransferase (234 aa).

The S-adenosyl-L-methionine site is built by arginine 39, glycine 59, aspartate 80, and methionine 124.

The protein belongs to the methyltransferase superfamily. UbiG/COQ3 family.

It carries out the reaction a 3-demethylubiquinol + S-adenosyl-L-methionine = a ubiquinol + S-adenosyl-L-homocysteine + H(+). It catalyses the reaction a 3-(all-trans-polyprenyl)benzene-1,2-diol + S-adenosyl-L-methionine = a 2-methoxy-6-(all-trans-polyprenyl)phenol + S-adenosyl-L-homocysteine + H(+). It participates in cofactor biosynthesis; ubiquinone biosynthesis. Functionally, O-methyltransferase that catalyzes the 2 O-methylation steps in the ubiquinone biosynthetic pathway. The chain is Ubiquinone biosynthesis O-methyltransferase from Aliivibrio fischeri (strain MJ11) (Vibrio fischeri).